Reading from the N-terminus, the 216-residue chain is Transmembrane emp24 domain-containing protein eca (216 aa).

Residues 1–20 (MRDQFICLALLLCALHSACG) form the signal peptide. The Lumenal portion of the chain corresponds to 21-182 (LYFHISETER…FRHTSESTNS (162 aa)). One can recognise a GOLD domain in the interval 30-126 (RKCFIEEVPD…QLRVHLDIQV (97 aa)). Positions 134-164 (ANVAQKEKLTELQLRIRQLLDQVEQITKEQN) form a coiled coil. A helical transmembrane segment spans residues 183–203 (RVLWWSLAQTLVLVCMGFWQM). The Cytoplasmic portion of the chain corresponds to 204 to 216 (RHLKSFFEAKKLV). Positions 213–216 (KKLV) match the Prevents secretion from ER motif.

It belongs to the EMP24/GP25L family.

It is found in the endoplasmic reticulum membrane. Functionally, eca and bai are essential, though not redundant, for dorsoventral patterning of the embryo. Specifically required during early embryogenesis for the activity of maternal tkv, while the zygotic tkv is not affected. Involved in Golgi organization. The protein is Transmembrane emp24 domain-containing protein eca of Drosophila pseudoobscura pseudoobscura (Fruit fly).